The chain runs to 84 residues: Sulfur carrier protein TusA (84 aa).

C21 acts as the Cysteine persulfide intermediate in catalysis.

Belongs to the sulfur carrier protein TusA family.

It is found in the cytoplasm. Its function is as follows. Sulfur carrier protein which probably makes part of a sulfur-relay system. The chain is Sulfur carrier protein TusA from Pseudomonas savastanoi pv. phaseolicola (strain 1448A / Race 6) (Pseudomonas syringae pv. phaseolicola (strain 1448A / Race 6)).